The sequence spans 251 residues: Aspartate/glutamate leucyltransferase (251 aa).

Belongs to the R-transferase family. Bpt subfamily.

It localises to the cytoplasm. The enzyme catalyses N-terminal L-glutamyl-[protein] + L-leucyl-tRNA(Leu) = N-terminal L-leucyl-L-glutamyl-[protein] + tRNA(Leu) + H(+). It carries out the reaction N-terminal L-aspartyl-[protein] + L-leucyl-tRNA(Leu) = N-terminal L-leucyl-L-aspartyl-[protein] + tRNA(Leu) + H(+). In terms of biological role, functions in the N-end rule pathway of protein degradation where it conjugates Leu from its aminoacyl-tRNA to the N-termini of proteins containing an N-terminal aspartate or glutamate. The sequence is that of Aspartate/glutamate leucyltransferase from Stenotrophomonas maltophilia (strain K279a).